The primary structure comprises 788 residues: Protein translocase subunit SecA (788 aa).

ATP contacts are provided by residues Gln-85, 103 to 107 (GEGKT), and Asp-494.

The protein belongs to the SecA family. In terms of assembly, monomer and homodimer. Part of the essential Sec protein translocation apparatus which comprises SecA, SecYEG and auxiliary proteins SecDF. Other proteins may also be involved.

The protein resides in the cell membrane. Its subcellular location is the cytoplasm. The catalysed reaction is ATP + H2O + cellular proteinSide 1 = ADP + phosphate + cellular proteinSide 2.. Its function is as follows. Part of the Sec protein translocase complex. Interacts with the SecYEG preprotein conducting channel. Has a central role in coupling the hydrolysis of ATP to the transfer of proteins into and across the cell membrane, serving as an ATP-driven molecular motor driving the stepwise translocation of polypeptide chains across the membrane. The polypeptide is Protein translocase subunit SecA (Oenococcus oeni (strain ATCC BAA-331 / PSU-1)).